We begin with the raw amino-acid sequence, 489 residues long: UDP-N-acetylmuramoyl-L-alanyl-D-glutamate--2,6-diaminopimelate ligase (489 aa).

Residue Ser32 participates in UDP-N-acetyl-alpha-D-muramoyl-L-alanyl-D-glutamate binding. 113–119 (GTNGKTT) lines the ATP pocket. Residues 154–155 (TT), Ser181, Gln187, and Arg189 contribute to the UDP-N-acetyl-alpha-D-muramoyl-L-alanyl-D-glutamate site. N6-carboxylysine is present on Lys221. Meso-2,6-diaminopimelate-binding positions include Arg381, 405–408 (DNPR), Gly456, and Glu460. The Meso-diaminopimelate recognition motif motif lies at 405–408 (DNPR).

Belongs to the MurCDEF family. MurE subfamily. Mg(2+) is required as a cofactor. Carboxylation is probably crucial for Mg(2+) binding and, consequently, for the gamma-phosphate positioning of ATP.

It is found in the cytoplasm. The enzyme catalyses UDP-N-acetyl-alpha-D-muramoyl-L-alanyl-D-glutamate + meso-2,6-diaminopimelate + ATP = UDP-N-acetyl-alpha-D-muramoyl-L-alanyl-gamma-D-glutamyl-meso-2,6-diaminopimelate + ADP + phosphate + H(+). It functions in the pathway cell wall biogenesis; peptidoglycan biosynthesis. Catalyzes the addition of meso-diaminopimelic acid to the nucleotide precursor UDP-N-acetylmuramoyl-L-alanyl-D-glutamate (UMAG) in the biosynthesis of bacterial cell-wall peptidoglycan. This is UDP-N-acetylmuramoyl-L-alanyl-D-glutamate--2,6-diaminopimelate ligase from Gloeobacter violaceus (strain ATCC 29082 / PCC 7421).